The primary structure comprises 206 residues: Large ribosomal subunit protein uL4 (206 aa).

Positions 65 to 76 (KQKGTGRARHSS) are enriched in basic residues. The segment at 65–94 (KQKGTGRARHSSARAPQFRGGGKAHGPVVR) is disordered.

This sequence belongs to the universal ribosomal protein uL4 family. In terms of assembly, part of the 50S ribosomal subunit.

One of the primary rRNA binding proteins, this protein initially binds near the 5'-end of the 23S rRNA. It is important during the early stages of 50S assembly. It makes multiple contacts with different domains of the 23S rRNA in the assembled 50S subunit and ribosome. Functionally, forms part of the polypeptide exit tunnel. This chain is Large ribosomal subunit protein uL4, found in Bartonella quintana (strain Toulouse) (Rochalimaea quintana).